Reading from the N-terminus, the 234-residue chain is Large ribosomal subunit protein uL1 (234 aa).

Belongs to the universal ribosomal protein uL1 family. Part of the 50S ribosomal subunit.

Binds directly to 23S rRNA. The L1 stalk is quite mobile in the ribosome, and is involved in E site tRNA release. In terms of biological role, protein L1 is also a translational repressor protein, it controls the translation of the L11 operon by binding to its mRNA. This is Large ribosomal subunit protein uL1 from Klebsiella pneumoniae (strain 342).